Here is a 144-residue protein sequence, read N- to C-terminus: MTSTVQSVQTFGRKKTATAVAHCKKGQGLIKVNGRPLEFLEPQILRIKLQEPLLLVGKERFQDVDIRIRVSGGGHVAQIYAVRQALAKALVAYYHKYVDEQSKRELKNIFAAYDKSLLVADPRRRESKKFGGPGARARYQKSYR.

Thr2 carries the post-translational modification N-acetylthreonine. Residues 124 to 144 (RRESKKFGGPGARARYQKSYR) are disordered.

The protein belongs to the universal ribosomal protein uS9 family.

This Caenorhabditis elegans protein is Small ribosomal subunit protein uS9 (rps-16).